The sequence spans 245 residues: Adenosylcobinamide-GDP ribazoletransferase (245 aa).

5 helical membrane passes run 31–51, 61–81, 113–133, 138–158, and 192–212; these read FGRA…VLYA, PLLQ…ALHL, VAVV…AALL, AGLL…LFLT, and LAFG…FAWL.

This sequence belongs to the CobS family. The cofactor is Mg(2+).

It localises to the cell inner membrane. It carries out the reaction alpha-ribazole + adenosylcob(III)inamide-GDP = adenosylcob(III)alamin + GMP + H(+). The enzyme catalyses alpha-ribazole 5'-phosphate + adenosylcob(III)inamide-GDP = adenosylcob(III)alamin 5'-phosphate + GMP + H(+). Its pathway is cofactor biosynthesis; adenosylcobalamin biosynthesis; adenosylcobalamin from cob(II)yrinate a,c-diamide: step 7/7. Joins adenosylcobinamide-GDP and alpha-ribazole to generate adenosylcobalamin (Ado-cobalamin). Also synthesizes adenosylcobalamin 5'-phosphate from adenosylcobinamide-GDP and alpha-ribazole 5'-phosphate. This chain is Adenosylcobinamide-GDP ribazoletransferase, found in Pseudomonas aeruginosa (strain ATCC 15692 / DSM 22644 / CIP 104116 / JCM 14847 / LMG 12228 / 1C / PRS 101 / PAO1).